Reading from the N-terminus, the 41-residue chain is Large ribosomal subunit protein bL36 (41 aa).

It belongs to the bacterial ribosomal protein bL36 family.

The chain is Large ribosomal subunit protein bL36 from Paracoccus denitrificans (strain Pd 1222).